Reading from the N-terminus, the 196-residue chain is ATP-dependent Clp protease proteolytic subunit (196 aa).

Serine 101 functions as the Nucleophile in the catalytic mechanism. Histidine 126 is a catalytic residue.

It belongs to the peptidase S14 family. Component of the chloroplastic Clp protease core complex.

The protein resides in the plastid. The protein localises to the chloroplast stroma. The catalysed reaction is Hydrolysis of proteins to small peptides in the presence of ATP and magnesium. alpha-casein is the usual test substrate. In the absence of ATP, only oligopeptides shorter than five residues are hydrolyzed (such as succinyl-Leu-Tyr-|-NHMec, and Leu-Tyr-Leu-|-Tyr-Trp, in which cleavage of the -Tyr-|-Leu- and -Tyr-|-Trp bonds also occurs).. Its function is as follows. Cleaves peptides in various proteins in a process that requires ATP hydrolysis. Has a chymotrypsin-like activity. Plays a major role in the degradation of misfolded proteins. This Gossypium barbadense (Sea Island cotton) protein is ATP-dependent Clp protease proteolytic subunit.